The following is a 344-amino-acid chain: Biotin synthase (344 aa).

The region spanning 40–267 is the Radical SAM core domain; that stretch reads AQVQVSTLLS…KSMVRLSAGR (228 aa). Cysteine 55, cysteine 59, and cysteine 62 together coordinate [4Fe-4S] cluster. Residues cysteine 99, cysteine 130, cysteine 190, and arginine 262 each contribute to the [2Fe-2S] cluster site.

It belongs to the radical SAM superfamily. Biotin synthase family. In terms of assembly, homodimer. [4Fe-4S] cluster is required as a cofactor. The cofactor is [2Fe-2S] cluster.

It catalyses the reaction (4R,5S)-dethiobiotin + (sulfur carrier)-SH + 2 reduced [2Fe-2S]-[ferredoxin] + 2 S-adenosyl-L-methionine = (sulfur carrier)-H + biotin + 2 5'-deoxyadenosine + 2 L-methionine + 2 oxidized [2Fe-2S]-[ferredoxin]. Its pathway is cofactor biosynthesis; biotin biosynthesis; biotin from 7,8-diaminononanoate: step 2/2. Functionally, catalyzes the conversion of dethiobiotin (DTB) to biotin by the insertion of a sulfur atom into dethiobiotin via a radical-based mechanism. This chain is Biotin synthase, found in Xanthomonas euvesicatoria pv. vesicatoria (strain 85-10) (Xanthomonas campestris pv. vesicatoria).